Here is a 2327-residue protein sequence, read N- to C-terminus: Genome polyprotein (2327 aa).

One can recognise a Peptidase C28 domain in the interval 1–201 (MNTTDCFIAV…WKANVQRKLK (201 aa)). At 1 to 1475 (MNTTDCFIAV…SFVKRAFKRL (1475 aa)) the chain is on the cytoplasmic side. Residues C51, H148, and D163 each act as for leader protease activity in the active site. Disordered stretches follow at residues 199–218 (KLKG…QSGN) and 238–265 (QLGD…NTQN). The N-myristoyl glycine; by host moiety is linked to residue G202. Polar residues-rich tracts occupy residues 204–218 (GQSS…QSGN) and 238–251 (QLGD…SNEG). Positions 252–265 (STDTTSTHTTNTQN) are enriched in low complexity. An antigenic epitope region spans residues 787–795 (ALLRAATYY). The short motif at 864–866 (RGD) is the Cell attachment site element. Residues 1184-1348 (NVHIANLCKV…DGYKINNKLD (165 aa)) enclose the SF3 helicase domain. ATP is bound at residue 1212-1219 (GKSGQGKS). The stretch at 1476–1496 (KENFEIVALCLTLLANIVIMI) is an intramembrane region. Topologically, residues 1497–2327 (RETHKRQKMV…RWVNAVCGDA (831 aa)) are cytoplasmic. Composition is skewed to basic and acidic residues over residues 1524 to 1533 (KTLDEAEKNP) and 1544 to 1558 (FRER…RDDV). Residues 1524–1579 (KTLDEAEKNPLETSGASTVGFRERTLPGQKARDDVNSEPAQPTEEQPQAEGPYAGP) form a disordered region. O-(5'-phospho-RNA)-tyrosine occurs at positions 1576, 1599, and 1623. The 197-residue stretch at 1647–1843 (APPTDLQKMV…YCSCVSRSML (197 aa)) folds into the Peptidase C3 domain. H1690 (for protease 3C activity; Proton donor/acceptor) is an active-site residue. Residues D1728 and C1807 each act as for protease 3C activity in the active site. The Nuclear localization signal signature appears at 1873 to 1881 (MRKTKLAPT). The RdRp catalytic domain maps to 2091–2209 (RNVWDVDYSA…ASDYDLDFEA (119 aa)). D2195 serves as the catalytic For RdRp activity.

It belongs to the picornaviruses polyprotein family. As to quaternary structure, interacts with host ISG15. In terms of assembly, interacts (via R-G-D motif) with host ITGAV/ITGB6. Interacts with host MAVS; this interaction inhibits binding of host TRAF3 to MAVS, thereby suppressing interferon-mediated responses. Forms homooligomers. As to quaternary structure, homohexamer. Interacts with host VIM. Interacts with host BECN1. In terms of assembly, interacts with host DCTN3. Interacts with RNA-dependent RNA polymerase; this interaction allows 3B-1 to binds 2 polymerases and act as a primer. It also allows the recruitment of the RNA-dependent RNA polymerase to host membranes. As to quaternary structure, interacts with RNA-dependent RNA polymerase; this interaction allows 3B-2 to act as a primer. In terms of assembly, interacts with RNA-dependent RNA polymerase; this interaction allows 3B-3 to act as a primer. Interacts with 3B-1; this interaction allows 3B-1 to binds 2 polymerases and act as a primer. It also allows the recruitment of the RNA-dependent RNA polymerase to host membranes. Interacts with 3B-2; this interaction allows 3B-2 to act as a primer. Interacts with 3B-3; this interaction allows 3B-3 to act as a primer. In terms of processing, removes six residues from its own C-terminus, generating sLb(pro). Specific enzymatic cleavages in vivo by the viral proteases yield a variety of precursors and mature proteins. The polyprotein seems to be cotranslationally cleaved at the 2A/2B junction by a ribosomal skip from one codon to the next without formation of a peptide bond. This process would release the L-P1-2A peptide from the translational complex. Post-translationally, during virion maturation, immature virions are rendered infectious following cleavage of VP0 into VP4 and VP2. This maturation seems to be an autocatalytic event triggered by the presence of RNA in the capsid and is followed by a conformational change of the particle. In terms of processing, myristoylation is required during RNA encapsidation and formation of the mature virus particle. Uridylylated by the polymerase and covalently linked to the 5'-end of genomic RNA. These uridylylated forms act as a nucleotide-peptide primer for the polymerase.

It localises to the host nucleus. The protein localises to the host cytoplasm. The protein resides in the virion. Its subcellular location is the host endoplasmic reticulum membrane. It is found in the host cytoplasmic vesicle membrane. It catalyses the reaction Autocatalytically cleaves itself from the polyprotein of the foot-and-mouth disease virus by hydrolysis of a Lys-|-Gly bond, but then cleaves host cell initiation factor eIF-4G at bonds -Gly-|-Arg- and -Lys-|-Arg-.. The catalysed reaction is a ribonucleoside 5'-triphosphate + H2O = a ribonucleoside 5'-diphosphate + phosphate + H(+). It carries out the reaction RNA(n) + a ribonucleoside 5'-triphosphate = RNA(n+1) + diphosphate. The enzyme catalyses Selective cleavage of Gln-|-Gly bond in the poliovirus polyprotein. In other picornavirus reactions Glu may be substituted for Gln, and Ser or Thr for Gly.. Functionally, autocatalytically cleaves itself from the polyprotein at the L/VP0 junction. Also cleaves the host translation initiation factors EIF4G1 and EIF4G3, in order to shut off the capped cellular mRNA transcription. Plays a role in counteracting host innate antiviral response using diverse mechanisms. Possesses a deubiquitinase activity acting on both 'Lys-48' and 'Lys-63'-linked polyubiquitin chains. In turn, inhibits the ubiquitination and subsequent activation of key signaling molecules of type I IFN response such as host RIGI, TBK1, TRAF3 and TRAF6. Inhibits host NF-kappa-B activity by inducing a decrease in RELA mRNA levels. Cleaves a peptide bond in the C-terminus of host ISG15, resulting in the damaging of this modifier that can no longer be attached to target proteins. Also cleaves host G3BP1 and G3BP2 in order to inhibit cytoplasmic stress granules assembly. Its function is as follows. Lies on the inner surface of the capsid shell. After binding to the host receptor, the capsid undergoes conformational changes. Capsid protein VP4 is released, capsid protein VP1 N-terminus is externalized, and together, they shape a pore in the host membrane through which the viral genome is translocated into the host cell cytoplasm. After genome has been released, the channel shrinks. Forms an icosahedral capsid of pseudo T=3 symmetry with capsid proteins VP1 and VP3. The capsid is composed of 60 copies of each capsid protein organized in the form of twelve pentamers and encloses the viral positive strand RNA genome. Upon acidifcation in the endosome, dissociates into pentamers. In terms of biological role, forms an icosahedral capsid of pseudo T=3 symmetry with capsid proteins VP0 and VP3. The capsid is composed of 60 copies of each capsid protein organized in the form of twelve pentamers and encloses the viral positive strand RNA genome. Upon acidifcation in the endosome, dissociates into pentamers. Functionally, forms an icosahedral capsid of pseudo T=3 symmetry with capsid proteins VP2 and VP3. The capsid is composed of 60 copies of each capsid protein organized in the form of twelve pentamers and encloses the viral positive strand RNA genome. Mediates cell entry by attachment to an integrin receptor, usually host ITGAV/ITGB6. In addition, targets host MAVS to suppress type I IFN pathway. Upon acidifcation in the endosome, dissociates into pentamers. Its function is as follows. Mediates self-processing of the polyprotein by a translational effect termed 'ribosome skipping'. Mechanistically, 2A-mediated cleavage occurs between the C-terminal glycine and the proline of the downstream protein 2B. In the case of foot-and-mouth disease virus, the 2A oligopeptide is post-translationally 'trimmed' from the C-terminus of the upstream protein 1D by 3C proteinase. Plays an essential role in the virus replication cycle by acting as a viroporin. Creates a pore in the host endoplasmic reticulum and as a consequence releases Ca2+ in the cytoplasm of infected cell. In turn, high levels of cytoplasmic calcium may trigger membrane trafficking and transport of viral ER-associated proteins to viroplasms, sites of viral genome replication. In terms of biological role, associates with and induces structural rearrangements of intracellular membranes. Triggers host autophagy by interacting with host BECN1 and thereby promotes viral replication. Participates in viral replication and interacts with host DHX9. Displays RNA-binding, nucleotide binding and NTPase activities. May play a role in virion morphogenesis and viral RNA encapsidation by interacting with the capsid protein VP3. Functionally, plays important roles in virus replication, virulence and host range. Cooperates with host DDX56 to inhibit IRF3 nuclear translocation and subsequent type I interferon production. Its function is as follows. Covalently linked to the 5'-end of both the positive-strand and negative-strand genomic RNAs. Acts as a genome-linked replication primer. Cysteine protease that generates mature viral proteins from the precursor polyprotein. In addition to its proteolytic activity, binds to viral RNA and thus influences viral genome replication. RNA and substrate bind cooperatively to the protease. In terms of biological role, RNA-directed RNA polymerase 3D-POL replicates genomic and antigenomic RNA by recognizing replications specific signals. Covalently attaches UMP to a tyrosine of VPg, which is used to prime RNA synthesis. The positive stranded RNA genome is first replicated at virus induced membranous vesicles, creating a dsRNA genomic replication form. This dsRNA is then used as template to synthesize positive stranded RNA genomes. ss(+)RNA genomes are either translated, replicated or encapsidated. The protein is Genome polyprotein of Bos taurus (Bovine).